Here is an 80-residue protein sequence, read N- to C-terminus: Large ribosomal subunit protein uL24 (80 aa).

Belongs to the universal ribosomal protein uL24 family. In terms of assembly, part of the 50S ribosomal subunit.

Its function is as follows. One of two assembly initiator proteins, it binds directly to the 5'-end of the 23S rRNA, where it nucleates assembly of the 50S subunit. Functionally, one of the proteins that surrounds the polypeptide exit tunnel on the outside of the subunit. The polypeptide is Large ribosomal subunit protein uL24 (Prosthecochloris aestuarii (strain DSM 271 / SK 413)).